The sequence spans 247 residues: Carboxy-S-adenosyl-L-methionine synthase (247 aa).

Residues Y40, 65–67 (GAS), 90–91 (DN), 122–123 (DI), N137, and R204 contribute to the S-adenosyl-L-methionine site.

Belongs to the class I-like SAM-binding methyltransferase superfamily. Cx-SAM synthase family. In terms of assembly, homodimer.

It carries out the reaction prephenate + S-adenosyl-L-methionine = carboxy-S-adenosyl-L-methionine + 3-phenylpyruvate + H2O. In terms of biological role, catalyzes the conversion of S-adenosyl-L-methionine (SAM) to carboxy-S-adenosyl-L-methionine (Cx-SAM). In Pseudomonas putida (strain GB-1), this protein is Carboxy-S-adenosyl-L-methionine synthase.